Here is a 498-residue protein sequence, read N- to C-terminus: UDP-N-acetylmuramate--L-alanine ligase (498 aa).

120–126 (GSHGKTT) contacts ATP.

Belongs to the MurCDEF family.

It localises to the cytoplasm. It carries out the reaction UDP-N-acetyl-alpha-D-muramate + L-alanine + ATP = UDP-N-acetyl-alpha-D-muramoyl-L-alanine + ADP + phosphate + H(+). The protein operates within cell wall biogenesis; peptidoglycan biosynthesis. In terms of biological role, cell wall formation. The protein is UDP-N-acetylmuramate--L-alanine ligase of Rickettsia typhi (strain ATCC VR-144 / Wilmington).